The primary structure comprises 205 residues: Bacterial microcompartment protein trimer-1 (205 aa).

The segment at 1 to 20 is disordered; the sequence is MDHAPERFDATPPAGEPDRP. 2 BMC domains span residues 21–106 and 120–204; these read ALGV…RFLD and SVII…GRLF.

This sequence belongs to the bacterial microcompartments protein family. In terms of assembly, homotrimerizes to form a pseudohexamer. Unlike its paralogs BMC-T2 and BMC-T3, the pseudohexamers do not stack. The concave side faces outward, with the N- and C-terminii exposed to the cytoplasm.

Its subcellular location is the bacterial microcompartment. In terms of biological role, a minor component of the bacterial microcompartment (BMC) shell. Expression of 5 proteins in E.coli (BMC-H (Hoch_5815), BMC-P (Hoch_5814), and 3 BMC-T (Hoch_5812, Hoch_5816, Hoch_3341)) forms 40 nm artificial BMCs with a molecular mass of 6.5 MDa. This protein does not form stacked pseudohexamers in the BMC. There are 20 BMC-T pseudohexamers per BMC, composed of mixed BMC-T1, BMC-T2 and BMC-T3. The shell facets are 20-30 Angstroms thick, with 1 of BMC-T trimers protruding to the exterior. This chain is Bacterial microcompartment protein trimer-1, found in Haliangium ochraceum (strain DSM 14365 / JCM 11303 / SMP-2).